A 223-amino-acid chain; its full sequence is DNA mismatch repair protein MutH (223 aa).

Belongs to the MutH family.

It is found in the cytoplasm. Its function is as follows. Sequence-specific endonuclease that cleaves unmethylated GATC sequences. It is involved in DNA mismatch repair. This chain is DNA mismatch repair protein MutH, found in Haemophilus influenzae (strain ATCC 51907 / DSM 11121 / KW20 / Rd).